We begin with the raw amino-acid sequence, 434 residues long: Glutamyl-tRNA reductase (434 aa).

Residues 52 to 55 (TCNR), Ser115, 120 to 122 (ETQ), and Gln126 contribute to the substrate site. Residue Cys53 is the Nucleophile of the active site. 195–200 (GAGEMI) lines the NADP(+) pocket.

The protein belongs to the glutamyl-tRNA reductase family. As to quaternary structure, homodimer.

It carries out the reaction (S)-4-amino-5-oxopentanoate + tRNA(Glu) + NADP(+) = L-glutamyl-tRNA(Glu) + NADPH + H(+). It functions in the pathway porphyrin-containing compound metabolism; protoporphyrin-IX biosynthesis; 5-aminolevulinate from L-glutamyl-tRNA(Glu): step 1/2. Its function is as follows. Catalyzes the NADPH-dependent reduction of glutamyl-tRNA(Glu) to glutamate 1-semialdehyde (GSA). The sequence is that of Glutamyl-tRNA reductase from Cupriavidus pinatubonensis (strain JMP 134 / LMG 1197) (Cupriavidus necator (strain JMP 134)).